Reading from the N-terminus, the 127-residue chain is Calcitonin gene-related peptide 2 (127 aa).

Positions 1 to 25 are cleaved as a signal peptide; the sequence is MGFRKFSPFLALSILVLYQAGSLQA. The propeptide occupies 26–79; sequence APFRSALESSPDPATLSKEDARLLLAALVQDYVQMKASELKQEQETQGSSSAAQ. An intrachain disulfide couples C83 to C88. F118 carries the phenylalanine amide modification. Positions 124-127 are excised as a propeptide; that stretch reads DLQA.

Belongs to the calcitonin family. As to expression, expressed in spinal cord, pituitary and thalamus.

It localises to the secreted. CALCB/CGRP2 is a peptide hormone that induces vasodilation mediated by the CALCRL-RAMP1 receptor complex. Dilates a variety of vessels including the coronary, cerebral and systemic vasculature. Its abundance in the CNS also points toward a neurotransmitter or neuromodulator role. This chain is Calcitonin gene-related peptide 2, found in Homo sapiens (Human).